The sequence spans 297 residues: 4-diphosphocytidyl-2-C-methyl-D-erythritol kinase (297 aa).

Residue lysine 6 is part of the active site. 94–104 contacts ATP; the sequence is PVAGGMAGGSA. Aspartate 136 is a catalytic residue.

Belongs to the GHMP kinase family. IspE subfamily.

The catalysed reaction is 4-CDP-2-C-methyl-D-erythritol + ATP = 4-CDP-2-C-methyl-D-erythritol 2-phosphate + ADP + H(+). It functions in the pathway isoprenoid biosynthesis; isopentenyl diphosphate biosynthesis via DXP pathway; isopentenyl diphosphate from 1-deoxy-D-xylulose 5-phosphate: step 3/6. Functionally, catalyzes the phosphorylation of the position 2 hydroxy group of 4-diphosphocytidyl-2C-methyl-D-erythritol. The polypeptide is 4-diphosphocytidyl-2-C-methyl-D-erythritol kinase (Nocardioides sp. (strain ATCC BAA-499 / JS614)).